The following is a 173-amino-acid chain: Shikimate kinase 2 (173 aa).

ATP is bound at residue G12–T17. Residues T16 and D32 each contribute to the Mg(2+) site. Substrate contacts are provided by D34, R58, and G79. Positions E112–R126 are LID domain. R120 provides a ligand contact to ATP. Substrate is bound at residue R139. Q155 is an ATP binding site.

The protein belongs to the shikimate kinase family. AroL subfamily. In terms of assembly, monomer. Requires Mg(2+) as cofactor.

It localises to the cytoplasm. The enzyme catalyses shikimate + ATP = 3-phosphoshikimate + ADP + H(+). It participates in metabolic intermediate biosynthesis; chorismate biosynthesis; chorismate from D-erythrose 4-phosphate and phosphoenolpyruvate: step 5/7. Functionally, catalyzes the specific phosphorylation of the 3-hydroxyl group of shikimic acid using ATP as a cosubstrate. The protein is Shikimate kinase 2 of Pectobacterium carotovorum subsp. carotovorum (strain PC1).